Reading from the N-terminus, the 668-residue chain is DNA ligase (668 aa).

NAD(+) is bound by residues 37-41 (DAVYD), 86-87 (SM), and Glu116. Residue Lys118 is the N6-AMP-lysine intermediate of the active site. Arg139, Glu173, Lys288, and Lys312 together coordinate NAD(+). Positions 406, 409, 424, and 429 each coordinate Zn(2+). In terms of domain architecture, BRCT spans 590-668 (APDNFFKEKT…EQEAIAKIEK (79 aa)).

This sequence belongs to the NAD-dependent DNA ligase family. LigA subfamily. The cofactor is Mg(2+). Requires Mn(2+) as cofactor.

It carries out the reaction NAD(+) + (deoxyribonucleotide)n-3'-hydroxyl + 5'-phospho-(deoxyribonucleotide)m = (deoxyribonucleotide)n+m + AMP + beta-nicotinamide D-nucleotide.. In terms of biological role, DNA ligase that catalyzes the formation of phosphodiester linkages between 5'-phosphoryl and 3'-hydroxyl groups in double-stranded DNA using NAD as a coenzyme and as the energy source for the reaction. It is essential for DNA replication and repair of damaged DNA. This Lactobacillus johnsonii (strain CNCM I-12250 / La1 / NCC 533) protein is DNA ligase.